A 184-amino-acid polypeptide reads, in one-letter code: Putative serine carboxypeptidase-like 52 (184 aa).

The N-terminal stretch at 1–22 (MRTFSPKLLLLLLLVLRHHAES) is a signal peptide. N-linked (GlcNAc...) asparagine glycosylation is present at asparagine 93.

Belongs to the peptidase S10 family.

It localises to the secreted. The chain is Putative serine carboxypeptidase-like 52 (SCPL52) from Arabidopsis thaliana (Mouse-ear cress).